The following is an 871-amino-acid chain: Dual O-methyltransferase/FAD-dependent monooxygenase CTB3 (871 aa).

Positions 1-429 (MMQFQRDLEA…GLLTVRSAGQ (429 aa)) are O-methyltransferase. Asp-279 is a binding site for S-adenosyl-L-methionine. His-331 functions as the Proton acceptor in the catalytic mechanism. The segment at 430–871 (TALSGTNTLT…NLVDCSEFVF (442 aa)) is FAD-dependent monooxygenase. FAD contacts are provided by Glu-485, Arg-569, Asp-793, and Ala-806.

It in the C-terminal section; belongs to the paxM FAD-dependent monooxygenase family. This sequence in the N-terminal section; belongs to the class I-like SAM-binding methyltransferase superfamily. Cation-independent O-methyltransferase family. COMT subfamily.

The catalysed reaction is nor-toralactone + S-adenosyl-L-methionine = toralactone + S-adenosyl-L-homocysteine + H(+). It catalyses the reaction toralactone + NADH + O2 + H(+) = 1-(3,4,5-trihydroxy-7-methoxynaphthalen-2-yl)propan-2-one + CO2 + NAD(+). Its pathway is mycotoxin biosynthesis. Functionally, dual O-methyltransferase/FAD-dependent monooxygenase; part of the gene cluster that mediates the biosynthesis of cercosporin, a light-activated, non-host-selective toxin. The perylenequinone chromophore of cercosporin absorbs light energy to attain an electronically-activated triplet state and produces active oxygen species such as the hydroxyl radical, superoxide, hydrogen peroxide or singlet oxygen upon reaction with oxygen molecules. These reactive oxygen species cause damage to various cellular components including lipids, proteins and nucleic acids. The first step of cercosporin biosynthesis is performed by the polyketide synthase CTB1 which catalyzes the formation of nor-toralactone. The starter unit acyltransferase (SAT) domain of CTB1 initiates polyketide extension by the selective utilization of acetyl-CoA, which is elongated to the heptaketide in the beta-ketoacyl synthase (KS) domain by successive condensations with six malonyl units introduced by the malonyl acyltransferase (MAT) domain. The product template (PT) domain catalyzes C4-C9 and C2-C11 aldol cyclizations and dehydrations to a trihydroxynaphthalene, which is thought to be delivered to the thioesterase (TE) domain for product release. The bifunctional enzyme CTB3 then methylates nor-toralactone to toralactone before conducting an unusual oxidative aromatic ring opening. The O-methyltransferase CTB2 further methylates the nascent OH-6 of the CBT3 product, blocking further oxidation at this site before the reductase CTB6 reduces the 2-oxopropyl ketone at position C7, giving naphthalene. The FAD-dependent monooxygenase CTB5 in concert with the multicopper oxidase CTB12 are responsible for homodimerization of naphthalene with CTB7 installing the dioxepine moiety, finally producing cercosporin. The fasciclin domain-containing protein CTB11 might act with CTB5 and CTB12 whereas the roles of CTB9 and CTB10 have still to be elucidated. This chain is Dual O-methyltransferase/FAD-dependent monooxygenase CTB3, found in Cercospora beticola (Sugarbeet leaf spot fungus).